A 349-amino-acid chain; its full sequence is Fructose-1,6-bisphosphatase class 1 (349 aa).

Residues glutamate 113, aspartate 135, isoleucine 137, and aspartate 138 each coordinate Mg(2+). Substrate contacts are provided by residues 138 to 141, asparagine 230, tyrosine 258, and lysine 288; that span reads DGSS. A Mg(2+)-binding site is contributed by glutamate 294.

It belongs to the FBPase class 1 family. In terms of assembly, homotetramer. The cofactor is Mg(2+).

The protein localises to the cytoplasm. The catalysed reaction is beta-D-fructose 1,6-bisphosphate + H2O = beta-D-fructose 6-phosphate + phosphate. Its pathway is carbohydrate biosynthesis; Calvin cycle. This Nostoc punctiforme (strain ATCC 29133 / PCC 73102) protein is Fructose-1,6-bisphosphatase class 1.